We begin with the raw amino-acid sequence, 20 residues long: Outer membrane protein 40Va (20 aa).

Belongs to the Gram-negative porin family. In terms of assembly, homotrimer.

The protein localises to the cell outer membrane. Functionally, forms pores that allow passive diffusion of small molecules across the outer membrane. This chain is Outer membrane protein 40Va, found in Vibrio alginolyticus.